A 203-amino-acid chain; its full sequence is Ribosomal RNA small subunit methyltransferase G (203 aa).

S-adenosyl-L-methionine contacts are provided by residues G73, L78, V124–E125, and R138.

The protein belongs to the methyltransferase superfamily. RNA methyltransferase RsmG family.

Its subcellular location is the cytoplasm. The enzyme catalyses guanosine(527) in 16S rRNA + S-adenosyl-L-methionine = N(7)-methylguanosine(527) in 16S rRNA + S-adenosyl-L-homocysteine. Its function is as follows. Specifically methylates the N7 position of guanine in position 527 of 16S rRNA. The protein is Ribosomal RNA small subunit methyltransferase G of Glaesserella parasuis serovar 5 (strain SH0165) (Haemophilus parasuis).